The primary structure comprises 150 residues: HTH-type transcriptional regulator LrpA (150 aa).

Residues 5 to 66 enclose the HTH asnC-type domain; it reads LDDIDRILVR…RINPEAVGHL (62 aa). The H-T-H motif DNA-binding region spans 24 to 43; that stretch reads LSELATRAGLSVSAVQSRVR. The L-phenylalanine site is built by Val100, Gly102, and Glu104.

In terms of assembly, homohexadecamer in the absence of any added ligand. Homooctamer. Tetramer of dimers. In the presence of phenylalanine, the hexadecamer dissociates into an octamer, which further dissociates partially into lower-order oligomers.

With respect to regulation, the DNA-binding activity of LrpA is modulated by interaction of LrpA with various effector molecules, including amino acids and vitamins. The DNA binding affinity is decreased by several amino acids, including phenylalanine, tyrosine, tryptophan, histidine, leucine and aspartate. Preferentially binds to aromatic amino acids. Besides amino acids, the binding affinity is also reduced by vitamins, including B1, B3, B6, VC, B7, B9, B12, VA and VK3. In terms of biological role, transcriptional regulator that probably plays an important role in M.tuberculosis persistence. Regulates the expression of several genes, including lat, rsmG, whiB2, lsr2 and Rv2011c. Acts by binding directly to the promoter region of the target genes. The protein is HTH-type transcriptional regulator LrpA of Mycobacterium tuberculosis (strain ATCC 25618 / H37Rv).